The chain runs to 220 residues: MNNKLIPLSREFFARDTNIVSQELLGKVLYFQGKTAIITETESYIGQDDPACHAARGRTKRTDIMFGPAGFSYVYLIYGMYYCLNFVTETDGFPAATLIRGAYIISTKDLYTADTSKVGSQISGETARRILIREHRRIPKFDVPNLEVSKVDGPGKLCKYLGINISHNKIDLINNNEFFVSDINLKLPYSTTTRIGITKGIDKLWRYVVTNPIDLTKISF.

It belongs to the DNA glycosylase MPG family.

The sequence is that of Putative 3-methyladenine DNA glycosylase from Rickettsia bellii (strain RML369-C).